We begin with the raw amino-acid sequence, 123 residues long: Large ribosomal subunit protein uL14 (123 aa).

It belongs to the universal ribosomal protein uL14 family. Part of the 50S ribosomal subunit. Forms a cluster with proteins L3 and L19. In the 70S ribosome, L14 and L19 interact and together make contacts with the 16S rRNA in bridges B5 and B8.

In terms of biological role, binds to 23S rRNA. Forms part of two intersubunit bridges in the 70S ribosome. The protein is Large ribosomal subunit protein uL14 of Serratia proteamaculans (strain 568).